Here is a 112-residue protein sequence, read N- to C-terminus: cAMP-regulated phosphoprotein 19 (112 aa).

Residue Met1 is modified to N-acetylmethionine. Positions 1–11 are enriched in low complexity; it reads MSAEVPEAASA. The disordered stretch occupies residues 1-49; it reads MSAEVPEAASAEEQKEMEDKVTSPEKAEEAKLKARYPHLGQKPGGSDFL. Residue Ser2 is modified to N-acetylserine. Ser2 and Ser23 each carry phosphoserine. The span at 12–32 shows a compositional bias: basic and acidic residues; the sequence is EEQKEMEDKVTSPEKAEEAKL. Phosphoserine; by GWL is present on residues Ser62 and Ser104. Positions 74–112 are disordered; it reads NKQLPAAAPDKTEVTGDHIPTPQDLPQRKPSLVASKLAG. At Ser104 the chain carries Phosphoserine; by PKA. Lys109 is subject to N6-acetyllysine.

Belongs to the endosulfine family. Interacts (when phosphorylated at Ser-62) with PPP2R2D. Interacts with SNCA. Interacts with PPP2R2A; the interaction is direct and this interaction inhibits PP2A activity. In terms of processing, phosphorylation at Ser-62 by MASTL/GWL during mitosis is essential for interaction with PPP2R2D (PR55-delta) and subsequent inactivation of PP2A. Phosphorylated by PKA.

It localises to the cytoplasm. Functionally, protein phosphatase inhibitor that specifically inhibits protein phosphatase 2A (PP2A) during mitosis. Inhibition of PP2A is enhanced when ARPP19 is phosphorylated. When phosphorylated at Ser-62 during mitosis, specifically interacts with PPP2R2D (PR55-delta) and inhibits its activity, leading to inactivation of PP2A, an essential condition to keep cyclin-B1-CDK1 activity high during M phase. May indirectly enhance GAP-43 expression by binding to the NGF-regulatory region of its mRNA. This chain is cAMP-regulated phosphoprotein 19 (Arpp19), found in Mus musculus (Mouse).